The following is a 306-amino-acid chain: Non-specific ribonucleoside hydrolase RihC (306 aa).

Residue His-235 is part of the active site.

It belongs to the IUNH family. RihC subfamily.

In terms of biological role, hydrolyzes both purine and pyrimidine ribonucleosides with a broad-substrate specificity. The polypeptide is Non-specific ribonucleoside hydrolase RihC (Salmonella paratyphi C (strain RKS4594)).